The primary structure comprises 486 residues: Glutamyl-tRNA(Gln) amidotransferase subunit A (486 aa).

Active-site charge relay system residues include lysine 80 and serine 155. Serine 179 functions as the Acyl-ester intermediate in the catalytic mechanism.

Belongs to the amidase family. GatA subfamily. As to quaternary structure, heterotrimer of A, B and C subunits.

It carries out the reaction L-glutamyl-tRNA(Gln) + L-glutamine + ATP + H2O = L-glutaminyl-tRNA(Gln) + L-glutamate + ADP + phosphate + H(+). Functionally, allows the formation of correctly charged Gln-tRNA(Gln) through the transamidation of misacylated Glu-tRNA(Gln) in organisms which lack glutaminyl-tRNA synthetase. The reaction takes place in the presence of glutamine and ATP through an activated gamma-phospho-Glu-tRNA(Gln). The polypeptide is Glutamyl-tRNA(Gln) amidotransferase subunit A (Geobacillus sp. (strain WCH70)).